The primary structure comprises 118 residues: HTH-type transcriptional regulator SarT (118 aa).

Residues 55-78 constitute a DNA-binding region (H-T-H motif); it reads MRDIISYIGIDQSRIVKSVKDLSK.

The protein belongs to the SarA family.

The protein localises to the cytoplasm. Its function is as follows. Transcriptional regulator acting as an intermediary between major regulators sarA and agr and virulence genes. Represses alpha-hemolysin (hla) gene expression. Down-regulates agr RNAIII expression by repressing sarU, a positive activator of agr expression. Up-regulates sarS, which induces the expression of the cell wall-associated protein A (spa). The sequence is that of HTH-type transcriptional regulator SarT (sarT) from Staphylococcus aureus (strain NCTC 8325 / PS 47).